The primary structure comprises 572 residues: Methionine--tRNA ligase (572 aa).

A 'HIGH' region motif is present at residues P11 to N21. Zn(2+) is bound by residues C143, C146, C156, and C159. Positions Q346–S350 match the 'KMSKS' region motif. Residue T349 participates in ATP binding.

The protein belongs to the class-I aminoacyl-tRNA synthetase family. MetG type 1 subfamily. Monomer. Zn(2+) is required as a cofactor.

The protein localises to the cytoplasm. The catalysed reaction is tRNA(Met) + L-methionine + ATP = L-methionyl-tRNA(Met) + AMP + diphosphate. Is required not only for elongation of protein synthesis but also for the initiation of all mRNA translation through initiator tRNA(fMet) aminoacylation. The protein is Methionine--tRNA ligase of Dinoroseobacter shibae (strain DSM 16493 / NCIMB 14021 / DFL 12).